We begin with the raw amino-acid sequence, 628 residues long: 1,4-alpha-glucan branching enzyme GlgB (628 aa).

Residue aspartate 304 is the Nucleophile of the active site. The active-site Proton donor is glutamate 355.

The protein belongs to the glycosyl hydrolase 13 family. GlgB subfamily. In terms of assembly, monomer.

It carries out the reaction Transfers a segment of a (1-&gt;4)-alpha-D-glucan chain to a primary hydroxy group in a similar glucan chain.. It participates in glycan biosynthesis; glycogen biosynthesis. In terms of biological role, catalyzes the formation of the alpha-1,6-glucosidic linkages in glycogen by scission of a 1,4-alpha-linked oligosaccharide from growing alpha-1,4-glucan chains and the subsequent attachment of the oligosaccharide to the alpha-1,6 position. This chain is 1,4-alpha-glucan branching enzyme GlgB, found in Streptococcus mutans serotype c (strain ATCC 700610 / UA159).